The sequence spans 1245 residues: Pesticidal crystal protein Cry5Ba (1245 aa).

The disordered stretch occupies residues 1219–1245 (PLPTDDQSSDGNTTSNTNSNTSMNNNQ). Residues 1222–1245 (TDDQSSDGNTTSNTNSNTSMNNNQ) show a composition bias toward low complexity.

Belongs to the delta endotoxin family.

Its function is as follows. Promotes colloidosmotic lysis by binding to the midgut epithelial cells of hymenopteran species. The sequence is that of Pesticidal crystal protein Cry5Ba (cry5Ba) from Bacillus thuringiensis.